A 580-amino-acid chain; its full sequence is 2-hydroxyacyl-CoA lyase 1 (580 aa).

Glutamate 47 provides a ligand contact to thiamine diphosphate. Residues 413–494 (TMDIGRLCIP…FIVLNNNGVY (82 aa)) form a thiamine pyrophosphate binding region. Aspartate 463 and asparagine 490 together coordinate Mg(2+).

Belongs to the TPP enzyme family. As to quaternary structure, homotetramer. Requires Mg(2+) as cofactor. Thiamine diphosphate serves as cofactor.

It is found in the peroxisome. The enzyme catalyses a 2-hydroxy-3-methyl fatty acyl-CoA = a 2-methyl-branched fatty aldehyde + formyl-CoA. The catalysed reaction is an (R)-2-hydroxy-long-chain-fatty acyl-CoA = a long-chain fatty aldehyde + formyl-CoA. It catalyses the reaction 2-hydroxy-3-methylhexadecanoyl-CoA = 2-methylpentadecanal + formyl-CoA. It carries out the reaction 2-hydroxyoctadecanoyl-CoA = heptadecanal + formyl-CoA. Peroxisomal 2-OH acyl-CoA lyase involved in the cleavage (C1 removal) reaction in the fatty acid alpha-oxydation in a thiamine pyrophosphate (TPP)-dependent manner. Involved in the degradation of 3-methyl-branched fatty acids and the shortening of 2-hydroxy long-chain fatty acids. The protein is 2-hydroxyacyl-CoA lyase 1 (hacl1) of Dictyostelium discoideum (Social amoeba).